A 99-amino-acid chain; its full sequence is Class II hydrophobin 3 (99 aa).

Positions 1-18 (MRIDILATAALLAQLASA) are cleaved as a signal peptide. 3 disulfides stabilise this stretch: Cys-31/Cys-79, Cys-40/Cys-70, and Cys-41/Cys-53.

It belongs to the cerato-ulmin hydrophobin family. As to quaternary structure, homodimer. Homodimers further self-assemble to form highly ordered films at water-air interfaces through intermolecular interactions.

Its subcellular location is the secreted. It localises to the cell wall. Functionally, aerial growth, conidiation, and dispersal of filamentous fungi in the environment rely upon a capability of their secreting small amphipathic proteins called hydrophobins (HPBs) with low sequence identity. Class I can self-assemble into an outermost layer of rodlet bundles on aerial cell surfaces, conferring cellular hydrophobicity that supports fungal growth, development and dispersal; whereas Class II form highly ordered films at water-air interfaces through intermolecular interactions but contribute nothing to the rodlet structure. Hyd3 is a class II hydrophobin required for barley root colonization. Hyd1 and Hyd3 are jointly required for conidial hydrophobicity and dispersal, but seem not to be involved in mycelia hydrophobicity. Inhibits conidial germination in environments not suitable for mycelial growth. Plays probably a role in intraspecific signaling or hyphal fusion. The polypeptide is Class II hydrophobin 3 (Bionectria ochroleuca (Gliocladium roseum)).